We begin with the raw amino-acid sequence, 225 residues long: Probable proteasome subunit beta type-6 (225 aa).

Belongs to the peptidase T1B family. The 26S proteasome consists of a 20S proteasome core and two 19S regulatory subunits. The 20S proteasome core is composed of 28 subunits that are arranged in four stacked rings, resulting in a barrel-shaped structure. The two end rings are each formed by seven alpha subunits, and the two central rings are each formed by seven beta subunits. The catalytic chamber with the active sites is on the inside of the barrel.

It is found in the cytoplasm. Its subcellular location is the nucleus. In terms of biological role, non-catalytic component of the proteasome, a multicatalytic proteinase complex which is characterized by its ability to cleave peptides with Arg, Phe, Tyr, Leu, and Glu adjacent to the leaving group at neutral or slightly basic pH. The proteasome has an ATP-dependent proteolytic activity. In Schizosaccharomyces pombe (strain 972 / ATCC 24843) (Fission yeast), this protein is Probable proteasome subunit beta type-6 (pam1).